We begin with the raw amino-acid sequence, 132 residues long: uncharacterized protein (132 aa).

Positions 113 to 132 are disordered; that stretch reads LDPQSPLHSPPLSTSPDSRR.

This is an uncharacterized protein from Saccharomyces cerevisiae (strain ATCC 204508 / S288c) (Baker's yeast).